Reading from the N-terminus, the 399-residue chain is Tyrosine--tRNA ligase (399 aa).

The 'HIGH' region motif lies at 42–51; it reads PTAPDLHLGH. A 'KMSKS' region motif is present at residues 226 to 230; the sequence is KMSKS. Lysine 229 contacts ATP. The region spanning 337-398 is the S4 RNA-binding domain; sequence IAIANLLKDA…GKRKFARITV (62 aa).

It belongs to the class-I aminoacyl-tRNA synthetase family. TyrS type 2 subfamily. As to quaternary structure, homodimer.

The protein resides in the cytoplasm. The catalysed reaction is tRNA(Tyr) + L-tyrosine + ATP = L-tyrosyl-tRNA(Tyr) + AMP + diphosphate + H(+). Its function is as follows. Catalyzes the attachment of tyrosine to tRNA(Tyr) in a two-step reaction: tyrosine is first activated by ATP to form Tyr-AMP and then transferred to the acceptor end of tRNA(Tyr). This chain is Tyrosine--tRNA ligase, found in Colwellia psychrerythraea (strain 34H / ATCC BAA-681) (Vibrio psychroerythus).